The primary structure comprises 391 residues: Elongation factor Tu 2 (391 aa).

Residues 10–201 form the tr-type G domain; it reads KPHVNIGTIG…EVDNYIPTPE (192 aa). The tract at residues 19 to 26 is G1; sequence GHVDHGKT. GTP is bound at residue 19–26; sequence GHVDHGKT. Threonine 26 lines the Mg(2+) pocket. Residues 55–59 are G2; it reads GITIS. Residues 76 to 79 are G3; the sequence is DCPG. GTP contacts are provided by residues 76–80 and 131–134; these read DCPGH and NKVD. The G4 stretch occupies residues 131 to 134; that stretch reads NKVD. The tract at residues 169 to 171 is G5; the sequence is SAL.

This sequence belongs to the TRAFAC class translation factor GTPase superfamily. Classic translation factor GTPase family. EF-Tu/EF-1A subfamily. As to quaternary structure, monomer.

It is found in the cytoplasm. It catalyses the reaction GTP + H2O = GDP + phosphate + H(+). GTP hydrolase that promotes the GTP-dependent binding of aminoacyl-tRNA to the A-site of ribosomes during protein biosynthesis. The chain is Elongation factor Tu 2 from Bartonella quintana (strain Toulouse) (Rochalimaea quintana).